We begin with the raw amino-acid sequence, 393 residues long: Protein TsgA (393 aa).

The next 12 membrane-spanning stretches (helical) occupy residues 11–31 (WISFLSYALTGALVIVTGMVM), 51–71 (FLNAGILISIFLNAWLMEIIP), 78–98 (FGFILMVLAVAGLMFSHSLAL), 101–121 (AAMFVLGLVSGITMSIGTFLI), 134–154 (LLFTDSFFSMAGMIFPMVAAF), 162–182 (WYWVYACIGLVYLAIFILTFG), 206–226 (IGVLFLAVAALCYILGQLGFI), 245–265 (ALVSDFWMSYMFGMWAFSFIL), 273–293 (ILTVLAGIAAVLMYLFITGTQ), 298–318 (WFILTLGFFSSAIYTSIITLG), 332–352 (FILTCGTIGTMLTFVVTGPIV), and 361–381 (LLTANGLYAVVFVMCFALGFV).

This sequence belongs to the major facilitator superfamily. TsgA family.

Its subcellular location is the cell inner membrane. The sequence is that of Protein TsgA from Salmonella schwarzengrund (strain CVM19633).